A 623-amino-acid polypeptide reads, in one-letter code: Glutathione import ATP-binding protein GsiA (623 aa).

2 ABC transporter domains span residues 15-269 (VENL…RALL) and 314-564 (LRVR…RKLL). ATP-binding positions include 49-56 (GESGSGKS) and 357-364 (GESGSGKS).

It belongs to the ABC transporter superfamily. Glutathione importer (TC 3.A.1.5.11) family. As to quaternary structure, the complex is composed of two ATP-binding proteins (GsiA), two transmembrane proteins (GsiC and GsiD) and a solute-binding protein (GsiB).

The protein resides in the cell inner membrane. It carries out the reaction glutathione(out) + ATP + H2O = glutathione(in) + ADP + phosphate + H(+). Part of the ABC transporter complex GsiABCD involved in glutathione import. Responsible for energy coupling to the transport system. This Shigella boydii serotype 4 (strain Sb227) protein is Glutathione import ATP-binding protein GsiA.